The primary structure comprises 190 residues: B3 domain-containing protein At1g49475 (190 aa).

Positions 1-27 (MRNMHTNRRSPGPITSAATQRRLKPEP) are disordered. A DNA-binding region (TF-B3) is located at residues 33-125 (KFIKIILLSR…CFRVVIFDVS (93 aa)).

The protein resides in the nucleus. This chain is B3 domain-containing protein At1g49475, found in Arabidopsis thaliana (Mouse-ear cress).